Consider the following 885-residue polypeptide: Pyruvate, phosphate dikinase (885 aa).

The interval 1–342 (MQRVYAFEDG…LYMLQTRNGK (342 aa)) is N-terminal. Residue Arg91 coordinates ATP. A linker 1 region spans residues 343–399 (MNATATVRTGVDMVEEGLITKEQAIMRIAPQSVDQLLHKNMPANYAEAPLVKGLPAS). A central region spans residues 400–497 (PGAATGAVVF…EVHEGDILTI (98 aa)). The Tele-phosphohistidine intermediate role is filled by His454. A linker 2 region spans residues 498-533 (DGSTGCVYKGEVPLEEPQVGSGYFGTILKWANEIKK). Residues 534–885 (IGVFANADLP…QAQIRHPREN (352 aa)) form a C-terminal region. Substrate-binding residues include Arg561, Arg617, Glu752, Gly773, Thr774, Asn775, and Asp776. Residue Glu752 participates in Mg(2+) binding. Asp776 is a Mg(2+) binding site. Cys839 (proton donor) is an active-site residue.

It belongs to the PEP-utilizing enzyme family. As to quaternary structure, homodimer. The cofactor is Mg(2+).

It carries out the reaction pyruvate + phosphate + ATP = phosphoenolpyruvate + AMP + diphosphate + H(+). In terms of biological role, catalyzes the dephosphorylation of phosphoenolpyruvate and diphosphate to produce ATP. This Entamoeba histolytica (strain ATCC 30459 / HM-1:IMSS / ABRM) protein is Pyruvate, phosphate dikinase.